The primary structure comprises 320 residues: Putative sporulation hydrolase CotR (320 aa).

Residues Met7 to Ile182 enclose the PNPLA domain. The short motif at Gly11 to Gly16 is the GXGXXG element. A GXSXG motif is present at residues Gly42 to Gly46. Ser44 serves as the catalytic Nucleophile. The Proton acceptor role is filled by Asp169.

The protein localises to the spore coat. The polypeptide is Putative sporulation hydrolase CotR (cotR) (Bacillus subtilis (strain 168)).